Consider the following 435-residue polypeptide: Transcription factor gkaF (435 aa).

Basic and acidic residues predominate over residues 1-19 (MGRPQRGDTAKERRERQDK). Disordered regions lie at residues 1–40 (MGRP…TVDW), 115–158 (STTA…SSQS), and 231–257 (FSSE…FLAP). Polar residues predominate over residues 28–40 (PISQSGLSDTVDW). Residues 143 to 158 (SQSSDSSKPSSTSSQS) are compositionally biased toward low complexity.

It is found in the nucleus. Functionally, transcription factor; part of the gene cluster that mediates the biosynthesis of GKK1032, fungal natural products containing a macrocyclic para-cyclophane connected to a decahydrofluorene ring system that show potent antitumor activities. This is Transcription factor gkaF from Penicillium citrinum.